Consider the following 852-residue polypeptide: Zinc finger protein 484 (852 aa).

Positions 8–78 constitute a KRAB domain; sequence VSFKDVTVDF…DGEIPSQSRP (71 aa). A Glycyl lysine isopeptide (Lys-Gly) (interchain with G-Cter in SUMO2) cross-link involves residue lysine 156. The C2H2-type 1; degenerate zinc finger occupies 223 to 245; the sequence is CECNQCGKPLHHKQALIQQQKIH. A C2H2-type 2; degenerate zinc finger spans residues 279–301; that stretch reads HECHECEAVFTQKSQLDGSQRVY. The segment at 328 to 350 adopts a C2H2-type 3; degenerate zinc-finger fold; sequence YKCSDYGRAFIQKSDLFRCQRIH. Residues 356–378 form a C2H2-type 4; degenerate zinc finger; it reads YEYSECEKNLPQNSNLNIHKKIH. 15 C2H2-type zinc fingers span residues 384-406, 412-434, 440-462, 468-490, 496-518, 524-546, 552-574, 580-602, 608-630, 636-658, 664-686, 692-714, 720-742, 748-770, and 776-798; these read FECTECGKAFTRKSTLSMHQKIH, YVCTECGKAFIRKSHFITHERIH, YECSDCGKSFIKKSQLHVHQRIH, FICSECGKVFTHKTNLIIHQKIH, YICTVCGKAFTDRSNLIKHQKIH, YKCSDCGKSFTWKSRLRIHQKCH, YECSECGKAFIQKSTLSMHQRIH, YVCTECGKAFFHKSHFITHERIH, YECSICGKSFTKKSQLHVHQQIH, YRCAECGKAFTDRSNLFTHQKIH, YKCSDCGKAFTRKSGLHIHQQSH, YECSECGKAFARKSTLIMHQRIH, YICNECGKSFIQKSHLNRHRRIH, YECSDCGKSFIKKSQLHEHHRIH, and YICAECGKAFTIRSNLIKHQKIH. Residue lysine 816 forms a Glycyl lysine isopeptide (Lys-Gly) (interchain with G-Cter in SUMO2) linkage.

The protein belongs to the krueppel C2H2-type zinc-finger protein family.

The protein localises to the nucleus. Functionally, may be involved in transcriptional regulation. The sequence is that of Zinc finger protein 484 (ZNF484) from Homo sapiens (Human).